The sequence spans 124 residues: Conotoxin Im14.2 (124 aa).

The N-terminal stretch at 1–20 (MARFLSILLCFAMATGLAAG) is a signal peptide. Positions 21–99 (IRYPDRVLGR…AENPVRDPKK (79 aa)) are excised as a propeptide.

In terms of processing, contain 2 disulfide bonds. As to expression, expressed by the venom duct.

It localises to the secreted. Functionally, probable neurotoxin. The polypeptide is Conotoxin Im14.2 (Conus imperialis (Imperial cone)).